Here is a 396-residue protein sequence, read N- to C-terminus: Tyrosine--tRNA ligase (396 aa).

Residues 43 to 52 carry the 'HIGH' region motif; sequence PTAPDIHLGH. Positions 227–231 match the 'KMSKS' region motif; it reads KMSKS. Lysine 230 is a binding site for ATP. Positions 335-395 constitute an S4 RNA-binding domain; it reads IGLATLLKEA…GKRKFARVTV (61 aa).

The protein belongs to the class-I aminoacyl-tRNA synthetase family. TyrS type 2 subfamily. As to quaternary structure, homodimer.

It localises to the cytoplasm. It carries out the reaction tRNA(Tyr) + L-tyrosine + ATP = L-tyrosyl-tRNA(Tyr) + AMP + diphosphate + H(+). Functionally, catalyzes the attachment of tyrosine to tRNA(Tyr) in a two-step reaction: tyrosine is first activated by ATP to form Tyr-AMP and then transferred to the acceptor end of tRNA(Tyr). This is Tyrosine--tRNA ligase from Haemophilus ducreyi (strain 35000HP / ATCC 700724).